Reading from the N-terminus, the 620-residue chain is MGVNAVHWFRKGLRLHDNPALRECIRGADTVRCVYILDPWFAGSSNVGINRWRFLLQCLEDLDANLRKLNSRLFVIRGQPADVFPRLFKEWNIAKLSIEYDSEPFGKERDAAIKKLASEAGVEVIVRISHTLYDLDKIIELNGGQPPLTYKRFQTLISRMEPLEMPVETITPEVMKKCTTPVFDDHDEKYGVPSLEELGFDTDGLPSAVWPGGETEALTRLERHLERKASVANFERPRMNANSLLASPTGLSPYLRFGCLSCRLFYFKLTDLYKKVKKNSSPPLSLYGQLLWREFFYTAATNNPRFDKMEGNPICVQIPWDKNPEALAKWAEGRTGFPWIDAIMTQLRQEGWIHHLARHAVACFLTRGDLWISWEEGMKVFEELLLDADWSVNAGSWMWLSCSSFFQQFFHCYCPVGFGRRTDPNGDYIRRYLPVLRGFPAKYIYDPWNAPESIQKAAKCIIGVNYPKPMVNHAEASRLNIERMKQIYQQLSRYRGLGLLATVPSNPNGNGNGGLMGYSPGESISGCGSTGGAQLGTGDGHTVVQSCTLGDSHSGTSGIQQQGYCQASSILHYAHGDNQQSHLLQAGRTALGTGISAGKRPNPEEETQSVGPKVQRQSTN.

A Photolyase/cryptochrome alpha/beta domain is found at 3–132 (VNAVHWFRKG…EVIVRISHTL (130 aa)). 3 consecutive short sequence motifs (LIR) follow at residues 50-54 (NRWRF), 82-87 (DVFPRL), and 151-156 (KRFQTL). Serine 252 provides a ligand contact to FAD. 4 consecutive short sequence motifs (LIR) follow at residues 255–260 (LRFGCL), 271–276 (DLYKKV), 285–290 (SLYGQL), and 335–339 (TGFPW). Glutamine 289 serves as a coordination point for FAD. Histidine 355 lines the FAD pocket. Residues 379-384 (KVFEEL) carry the LIR 8 motif. 387–389 (DAD) contributes to the FAD binding site. 5 short sequence motifs (LIR) span residues 395–400 (GSWMWL), 411–416 (HCYCPV), 430–435 (RRYLPV), 486–491 (QIYQQL), and 492–497 (SRYRGL). Positions 593 to 620 (TGISAGKRPNPEEETQSVGPKVQRQSTN) are disordered.

This sequence belongs to the DNA photolyase class-1 family. As to quaternary structure, component of the circadian core oscillator, which includes the CRY proteins, CLOCK or NPAS2, BMAL1 or BMAL2, CSNK1E, and the PER proteins. FAD is required as a cofactor. It depends on (6R)-5,10-methylene-5,6,7,8-tetrahydrofolate as a cofactor. In terms of tissue distribution, expressed in the retina.

It localises to the cytoplasm. The protein resides in the nucleus. Its function is as follows. Transcriptional repressor which forms a core component of the circadian clock. The circadian clock, an internal time-keeping system, regulates various physiological processes through the generation of approximately 24 hour circadian rhythms in gene expression, which are translated into rhythms in metabolism and behavior. It is derived from the Latin roots 'circa' (about) and 'diem' (day) and acts as an important regulator of a wide array of physiological functions including metabolism, sleep, body temperature, blood pressure, endocrine, immune, cardiovascular, and renal function. Consists of two major components: the central clock, residing in the suprachiasmatic nucleus (SCN) of the brain, and the peripheral clocks that are present in nearly every tissue and organ system. Both the central and peripheral clocks can be reset by environmental cues, also known as Zeitgebers (German for 'timegivers'). The predominant Zeitgeber for the central clock is light, which is sensed by retina and signals directly to the SCN. The central clock entrains the peripheral clocks through neuronal and hormonal signals, body temperature and feeding-related cues, aligning all clocks with the external light/dark cycle. Circadian rhythms allow an organism to achieve temporal homeostasis with its environment at the molecular level by regulating gene expression to create a peak of protein expression once every 24 hours to control when a particular physiological process is most active with respect to the solar day. Transcription and translation of core clock components (CLOCK, NPAS2, BMAL1, BMAL2, PER1, PER2, PER3, CRY1 and CRY2) plays a critical role in rhythm generation, whereas delays imposed by post-translational modifications (PTMs) are important for determining the period (tau) of the rhythms (tau refers to the period of a rhythm and is the length, in time, of one complete cycle). A diurnal rhythm is synchronized with the day/night cycle, while the ultradian and infradian rhythms have a period shorter and longer than 24 hours, respectively. Disruptions in the circadian rhythms contribute to the pathology of cardiovascular diseases, cancer, metabolic syndromes and aging. A transcription/translation feedback loop (TTFL) forms the core of the molecular circadian clock mechanism. Transcription factors, CLOCK or NPAS2 and BMAL1 or BMAL2, form the positive limb of the feedback loop, act in the form of a heterodimer and activate the transcription of core clock genes and clock-controlled genes (involved in key metabolic processes), harboring E-box elements (5'-CACGTG-3') within their promoters. The core clock genes: PER1/2/3 and CRY1/2 which are transcriptional repressors form the negative limb of the feedback loop and interact with the CLOCK|NPAS2-BMAL1|BMAL2 heterodimer inhibiting its activity and thereby negatively regulating their own expression. This heterodimer also activates nuclear receptors NR1D1/2 and RORA/B/G, which form a second feedback loop and which activate and repress BMAL1 transcription, respectively. CRY1 and CRY2 have redundant functions but also differential and selective contributions at least in defining the pace of the SCN circadian clock and its circadian transcriptional outputs. More potent transcriptional repressor in cerebellum and liver than CRY2, though more effective in lengthening the period of the SCN oscillator. On its side, CRY2 seems to play a critical role in tuning SCN circadian period by opposing the action of CRY1. With CRY2, is dispensable for circadian rhythm generation but necessary for the development of intercellular networks for rhythm synchrony. Capable of translocating circadian clock core proteins such as PER proteins to the nucleus. Interacts with CLOCK-BMAL1 independently of PER proteins and is found at CLOCK-BMAL1-bound sites, suggesting that CRY may act as a molecular gatekeeper to maintain CLOCK-BMAL1 in a poised and repressed state until the proper time for transcriptional activation. The sequence is that of Cryptochrome-1 (CRY1) from Erithacus rubecula (European robin).